The chain runs to 342 residues: N-acetyl-gamma-glutamyl-phosphate reductase (342 aa).

The active site involves Cys-149.

Belongs to the NAGSA dehydrogenase family. Type 1 subfamily.

Its subcellular location is the cytoplasm. The enzyme catalyses N-acetyl-L-glutamate 5-semialdehyde + phosphate + NADP(+) = N-acetyl-L-glutamyl 5-phosphate + NADPH + H(+). Its pathway is amino-acid biosynthesis; L-arginine biosynthesis; N(2)-acetyl-L-ornithine from L-glutamate: step 3/4. Functionally, catalyzes the NADPH-dependent reduction of N-acetyl-5-glutamyl phosphate to yield N-acetyl-L-glutamate 5-semialdehyde. The protein is N-acetyl-gamma-glutamyl-phosphate reductase of Roseobacter denitrificans (strain ATCC 33942 / OCh 114) (Erythrobacter sp. (strain OCh 114)).